Here is a 717-residue protein sequence, read N- to C-terminus: SUN domain-containing protein 2 (717 aa).

The interval 1 to 66 (MSRRSQRLTR…PQLGPSSDAH (66 aa)) is disordered. The interval 1 to 139 (MSRRSQRLTR…SSSGYSSEDD (139 aa)) is LMNA-binding. Over 1-212 (MSRRSQRLTR…LTRRFSSLKT (212 aa)) the chain is Nuclear. The residue at position 12 (Ser-12) is a Phosphoserine. A compositionally biased stretch (low complexity) spans 19–32 (SSSSGGSSVAGSQS). 2 positions are modified to phosphoserine: Ser-38 and Ser-54. Thr-107 is subject to Phosphothreonine. Residues Ser-110, Ser-113, Ser-116, and Ser-136 each carry the phosphoserine modification. The helical transmembrane segment at 213 to 233 (FLWFLLPLLLLTCLTYGAWYF) threads the bilayer. At 234–717 (YPYGLQTFHP…RFRVHGEPAH (484 aa)) the chain is on the perinuclear space side. 3 coiled-coil regions span residues 273 to 296 (EQRV…EFSS), 348 to 440 (RRET…EEVG), and 475 to 506 (LLQR…SARE). Residues 507–717 (AAASLSLTLQ…RFRVHGEPAH (211 aa)) are sufficient for interaction with SYNE1 and SYNE2. The SUN domain maps to 555–716 (GASVISTRCS…YRFRVHGEPA (162 aa)). Cys-601 and Cys-705 are joined by a disulfide. A glycan (N-linked (GlcNAc...) asparagine) is linked at Asn-636.

In terms of assembly, core component of the LINC complex which is composed of inner nuclear membrane SUN domain-containing proteins coupled to outer nuclear membrane KASH domain-containing nesprins. SUN and KASH domain-containing proteins seem to bind each other promiscuously; however, differentially expression of LINC complex constituents is giving rise to specific assemblies. At least SUN1/2-containing core LINC complexes are proposed to be hexameric composed of three protomers of each KASH and SUN domain-containing protein. Interacts with SYNE2; the SUN2:SYNE2/KASH2 LINC complex is a heterohexamer; the homotrimeric cloverleave-like conformation of the SUN domain is a prerequisite for LINC complex formation in which three separate SYNE2/KASH2 peptides bind at the interface of adjacent SUN domains. Component of a probable SUN2:KASH5 LINC complex. Interacts with SYNE1 and SYNE3; probably forming respective LINC complexes. Interacts with A-type lamin. Interaction with lamins B1 and C is hardly detectable. Interacts with EMD and RAB5A. Interacts with TMEM43. Interacts with TMEM201. In terms of processing, the disulfide bond with SYNE2 is required for stability of the SUN2:SYNE2/KASH2 LINC complex under tensile forces though not required for the interaction. The disulfide bond is proposed to be conserved in LINC complexes involved in force transmission. In terms of tissue distribution, widely expressed. Highly expressed in heart, lung and muscle. Weakly expressed in fetal heart. Slightly overexpressed in some heart tissues form patients with congenital heart defects.

The protein localises to the nucleus inner membrane. Its subcellular location is the nucleus envelope. It is found in the endosome membrane. Functionally, as a component of the LINC (LInker of Nucleoskeleton and Cytoskeleton) complex, involved in the connection between the nuclear lamina and the cytoskeleton. The nucleocytoplasmic interactions established by the LINC complex play an important role in the transmission of mechanical forces across the nuclear envelope and in nuclear movement and positioning. Specifically, SYNE2 and SUN2 assemble in arrays of transmembrane actin-associated nuclear (TAN) lines which are bound to F-actin cables and couple the nucleus to retrograde actin flow during actin-dependent nuclear movement. Required for interkinetic nuclear migration (INM) and essential for nucleokinesis and centrosome-nucleus coupling during radial neuronal migration in the cerebral cortex and during glial migration. Required for nuclear migration in retinal photoreceptor progenitors implicating association with cytoplasmic dynein-dynactin and kinesin motor complexes, and probably B-type lamins; SUN1 and SUN2 seem to act redundantly. The SUN1/2:KASH5 LINC complex couples telomeres to microtubules during meiosis; SUN1 and SUN2 seem to act at least partial redundantly. Anchors chromosome movement in the prophase of meiosis and is involved in selective gene expression of coding and non-coding RNAs needed for gametogenesis. Required for telomere attachment to nuclear envelope and gametogenesis. May also function on endocytic vesicles as a receptor for RAB5-GDP and participate in the activation of RAB5. This Homo sapiens (Human) protein is SUN domain-containing protein 2.